The sequence spans 321 residues: Sideroflexin-1-3 (321 aa).

Helical transmembrane passes span 101–121 (IITG…FWQW), 146–168 (LVTS…NHAV), 174–194 (LLGR…NIPC), 220–240 (AAVV…IPGM), and 266–286 (IQTL…CAFF).

Belongs to the sideroflexin family.

It is found in the mitochondrion membrane. Mitochondrial amino-acid transporter that mediates transport of serine into mitochondria. This chain is Sideroflexin-1-3, found in Drosophila melanogaster (Fruit fly).